Here is a 318-residue protein sequence, read N- to C-terminus: 4-hydroxy-3-methylbut-2-enyl diphosphate reductase (318 aa).

Cysteine 12 serves as a coordination point for [4Fe-4S] cluster. (2E)-4-hydroxy-3-methylbut-2-enyl diphosphate is bound by residues histidine 41 and histidine 74. The dimethylallyl diphosphate site is built by histidine 41 and histidine 74. Positions 41 and 74 each coordinate isopentenyl diphosphate. Residue cysteine 96 coordinates [4Fe-4S] cluster. Residue histidine 124 coordinates (2E)-4-hydroxy-3-methylbut-2-enyl diphosphate. Histidine 124 is a dimethylallyl diphosphate binding site. Histidine 124 contacts isopentenyl diphosphate. Catalysis depends on glutamate 126, which acts as the Proton donor. Residue threonine 167 coordinates (2E)-4-hydroxy-3-methylbut-2-enyl diphosphate. Cysteine 197 contacts [4Fe-4S] cluster. Serine 225, serine 226, asparagine 227, and serine 269 together coordinate (2E)-4-hydroxy-3-methylbut-2-enyl diphosphate. Dimethylallyl diphosphate contacts are provided by serine 225, serine 226, asparagine 227, and serine 269. The isopentenyl diphosphate site is built by serine 225, serine 226, asparagine 227, and serine 269.

Belongs to the IspH family. The cofactor is [4Fe-4S] cluster.

The catalysed reaction is isopentenyl diphosphate + 2 oxidized [2Fe-2S]-[ferredoxin] + H2O = (2E)-4-hydroxy-3-methylbut-2-enyl diphosphate + 2 reduced [2Fe-2S]-[ferredoxin] + 2 H(+). It carries out the reaction dimethylallyl diphosphate + 2 oxidized [2Fe-2S]-[ferredoxin] + H2O = (2E)-4-hydroxy-3-methylbut-2-enyl diphosphate + 2 reduced [2Fe-2S]-[ferredoxin] + 2 H(+). It participates in isoprenoid biosynthesis; dimethylallyl diphosphate biosynthesis; dimethylallyl diphosphate from (2E)-4-hydroxy-3-methylbutenyl diphosphate: step 1/1. Its pathway is isoprenoid biosynthesis; isopentenyl diphosphate biosynthesis via DXP pathway; isopentenyl diphosphate from 1-deoxy-D-xylulose 5-phosphate: step 6/6. Catalyzes the conversion of 1-hydroxy-2-methyl-2-(E)-butenyl 4-diphosphate (HMBPP) into a mixture of isopentenyl diphosphate (IPP) and dimethylallyl diphosphate (DMAPP). Acts in the terminal step of the DOXP/MEP pathway for isoprenoid precursor biosynthesis. The sequence is that of 4-hydroxy-3-methylbut-2-enyl diphosphate reductase from Francisella tularensis subsp. holarctica (strain LVS).